The primary structure comprises 135 residues: uncharacterized protein (135 aa).

The tract at residues 1–70 is disordered; the sequence is MKPDWPRRGA…RWRPQGTGTG (70 aa).

This is an uncharacterized protein from Homo sapiens (Human).